The following is a 122-amino-acid chain: Nuclear transport factor 2A (122 aa).

The residue at position 1 (methionine 1) is an N-acetylmethionine. In terms of domain architecture, NTF2 spans 6 to 119; sequence VAKAFVEHYY…YYVFNDIFRL (114 aa).

In terms of assembly, interacts with RAN1. In terms of tissue distribution, expressed in roots, stems, leaves and flowers, and, at low levels, in siliques.

The protein resides in the cytoplasm. Its subcellular location is the nucleus. The protein localises to the nucleus envelope. Functionally, facilitates protein transport into the nucleus. Interacts with various nucleoporins and with Ran-GDP. Could be part of a multicomponent system of cytosolic factors that assemble at the pore complex during nuclear import. The sequence is that of Nuclear transport factor 2A from Arabidopsis thaliana (Mouse-ear cress).